Consider the following 142-residue polypeptide: Neuritin (142 aa).

The N-terminal stretch at 1–27 is a signal peptide; the sequence is MGLKLNGRYISLILAVQIAYLVQAVRA. Glycine 116 carries the GPI-anchor amidated glycine lipid modification. Positions 117 to 142 are cleaved as a propeptide — removed in mature form; that stretch reads AAGSLLPALSVLLVSLSAALATWFSF.

This sequence belongs to the neuritin family. Component of the outer core of AMPAR complex. AMPAR complex consists of an inner core made of 4 pore-forming GluA/GRIA proteins (GRIA1, GRIA2, GRIA3 and GRIA4) and 4 major auxiliary subunits arranged in a twofold symmetry. One of the two pairs of distinct binding sites is occupied either by CNIH2, CNIH3 or CACNG2, CACNG3. The other harbors CACNG2, CACNG3, CACNG4, CACNG8 or GSG1L. This inner core of AMPAR complex is complemented by outer core constituents binding directly to the GluA/GRIA proteins at sites distinct from the interaction sites of the inner core constituents. Outer core constituents include at least PRRT1, PRRT2, CKAMP44/SHISA9, FRRS1L and NRN1. The proteins of the inner and outer core serve as a platform for other, more peripherally associated AMPAR constituents. Alone or in combination, these auxiliary subunits control the gating and pharmacology of the AMPAR complex and profoundly impact their biogenesis and protein processing. As to expression, expressed in the brain (at protein level).

It localises to the cell membrane. It is found in the synapse. Functionally, promotes neurite outgrowth and especially branching of neuritic processes in primary hippocampal and cortical cells. The protein is Neuritin (Nrn1) of Mus musculus (Mouse).